Reading from the N-terminus, the 113-residue chain is Integration host factor subunit alpha (113 aa).

Disordered regions lie at residues 59–80 (GNFQ…GETI) and 94–113 (QKLK…ASAE). A compositionally biased stretch (pro residues) spans 104 to 113 (NSPPDPASAE).

It belongs to the bacterial histone-like protein family. As to quaternary structure, heterodimer of an alpha and a beta chain.

Functionally, this protein is one of the two subunits of integration host factor, a specific DNA-binding protein that functions in genetic recombination as well as in transcriptional and translational control. This Bordetella pertussis (strain Tohama I / ATCC BAA-589 / NCTC 13251) protein is Integration host factor subunit alpha.